A 265-amino-acid chain; its full sequence is Small ribosomal subunit protein uS2 (265 aa).

Positions 226–265 (AAAPNSASVREEEFSADAADEGKGRRAPAKKGDKKADAAE) are disordered. The segment covering 245-265 (DEGKGRRAPAKKGDKKADAAE) has biased composition (basic and acidic residues).

The protein belongs to the universal ribosomal protein uS2 family.

The chain is Small ribosomal subunit protein uS2 from Xanthomonas axonopodis pv. citri (strain 306).